Consider the following 487-residue polypeptide: Betaine aldehyde dehydrogenase (487 aa).

3 residues coordinate K(+): Ser-26, Ile-27, and Asp-93. 150-152 is a binding site for NAD(+); it reads GAW. Residue Lys-162 is the Charge relay system of the active site. NAD(+) is bound by residues 176-179 and 229-232; these read KPSE and SVPT. Leu-244 serves as a coordination point for K(+). The active-site Proton acceptor is Glu-250. Gly-252, Cys-284, and Glu-384 together coordinate NAD(+). The Nucleophile role is filled by Cys-284. Residue Cys-284 is modified to Cysteine sulfenic acid (-SOH). The K(+) site is built by Lys-454 and Gly-457. The active-site Charge relay system is the Glu-461.

This sequence belongs to the aldehyde dehydrogenase family. Dimer of dimers. K(+) is required as a cofactor.

It carries out the reaction betaine aldehyde + NAD(+) + H2O = glycine betaine + NADH + 2 H(+). It participates in amine and polyamine biosynthesis; betaine biosynthesis via choline pathway; betaine from betaine aldehyde: step 1/1. Functionally, involved in the biosynthesis of the osmoprotectant glycine betaine. Catalyzes the irreversible oxidation of betaine aldehyde to the corresponding acid. The sequence is that of Betaine aldehyde dehydrogenase from Sinorhizobium fredii (strain NBRC 101917 / NGR234).